A 668-amino-acid polypeptide reads, in one-letter code: ATP-dependent RNA helicase MSS116, mitochondrial (668 aa).

A mitochondrion-targeting transit peptide spans 1–38 (MLKQLSRSLGIRSSPIVANLIRSKQVCTRGFHISLVKQ). Residues 87–115 (DFKGKGYIHDSIINSLHKNDFKELTPIQQ) carry the Q motif motif. Residues 119 to 300 (VPIFNTEKGL…KKHIHPEYEF (182 aa)) enclose the Helicase ATP-binding domain. Residue 132–139 (AKTGTGKT) coordinates ATP. The DEAD box signature appears at 242 to 245 (DEAD). Residues 332-501 (SLSELHGIMK…NIIDQIESPL (170 aa)) form the Helicase C-terminal domain. Residues 585–668 (YSDFSRSGMS…EHRRIRDHDE (84 aa)) form a disordered region. Residues 586 to 597 (SDFSRSGMSQRP) are compositionally biased toward polar residues. The segment covering 609 to 636 (NGRGKYGNNRNNDWSYQNKNRYNNNNNR) has biased composition (low complexity). Over residues 637-668 (QTERSYDSDRKSHNDWKYEKKFEHRRIRDHDE) the composition is skewed to basic and acidic residues.

This sequence belongs to the DEAD box helicase family. DDX18/HAS1 subfamily.

The protein resides in the mitochondrion matrix. It catalyses the reaction ATP + H2O = ADP + phosphate + H(+). Its function is as follows. ATP-dependent RNA helicase required for mitochondrial splicing of group I and II introns. Also required for efficient mitochondrial translation. The polypeptide is ATP-dependent RNA helicase MSS116, mitochondrial (MSS116) (Candida albicans (strain SC5314 / ATCC MYA-2876) (Yeast)).